The primary structure comprises 205 residues: Ribosomal RNA small subunit methyltransferase G (205 aa).

Residues Gly-66, Phe-71, 119-120, and Arg-135 each bind S-adenosyl-L-methionine; that span reads IE.

The protein belongs to the methyltransferase superfamily. RNA methyltransferase RsmG family.

The protein localises to the cytoplasm. The catalysed reaction is guanosine(527) in 16S rRNA + S-adenosyl-L-methionine = N(7)-methylguanosine(527) in 16S rRNA + S-adenosyl-L-homocysteine. In terms of biological role, specifically methylates the N7 position of guanine in position 527 of 16S rRNA. The sequence is that of Ribosomal RNA small subunit methyltransferase G from Rhizobium etli (strain ATCC 51251 / DSM 11541 / JCM 21823 / NBRC 15573 / CFN 42).